A 232-amino-acid polypeptide reads, in one-letter code: NAD(P)H-quinone oxidoreductase subunit K 1 (232 aa).

Positions 49, 50, 114, and 145 each coordinate [4Fe-4S] cluster.

This sequence belongs to the complex I 20 kDa subunit family. As to quaternary structure, NDH-1 can be composed of about 15 different subunits; different subcomplexes with different compositions have been identified which probably have different functions. Requires [4Fe-4S] cluster as cofactor.

It is found in the cell inner membrane. It catalyses the reaction a plastoquinone + NADH + (n+1) H(+)(in) = a plastoquinol + NAD(+) + n H(+)(out). The catalysed reaction is a plastoquinone + NADPH + (n+1) H(+)(in) = a plastoquinol + NADP(+) + n H(+)(out). NDH-1 shuttles electrons from an unknown electron donor, via FMN and iron-sulfur (Fe-S) centers, to quinones in the respiratory and/or the photosynthetic chain. The immediate electron acceptor for the enzyme in this species is believed to be plastoquinone. Couples the redox reaction to proton translocation, and thus conserves the redox energy in a proton gradient. Cyanobacterial NDH-1 also plays a role in inorganic carbon-concentration. The chain is NAD(P)H-quinone oxidoreductase subunit K 1 from Gloeobacter violaceus (strain ATCC 29082 / PCC 7421).